The following is a 235-amino-acid chain: tRNA (cytidine-2'-O-)-methyltransferase TrmJ (235 aa).

Residues 77-79, Gly111, Ile131, and 138-140 contribute to the S-adenosyl-L-methionine site; these read TSS and PVL.

It belongs to the class IV-like SAM-binding methyltransferase superfamily. RNA methyltransferase TrmH family. As to quaternary structure, homodimer.

Its subcellular location is the cytoplasm. It carries out the reaction cytidine(32) in tRNA + S-adenosyl-L-methionine = 2'-O-methylcytidine(32) in tRNA + S-adenosyl-L-homocysteine + H(+). Catalyzes the formation of 2'O-methylated cytidine (Cm32) at position 32 in tRNA. Is specific for cytidine. In Sulfolobus acidocaldarius (strain ATCC 33909 / DSM 639 / JCM 8929 / NBRC 15157 / NCIMB 11770), this protein is tRNA (cytidine-2'-O-)-methyltransferase TrmJ.